Consider the following 233-residue polypeptide: 5'-methylthioadenosine/S-adenosylhomocysteine nucleosidase (233 aa).

Catalysis depends on Glu-12, which acts as the Proton acceptor. Substrate is bound by residues Gly-78, Ile-152, and 173 to 174 (ME). Residue Asp-197 is the Proton donor of the active site.

The protein belongs to the PNP/UDP phosphorylase family. MtnN subfamily. Homodimer.

The catalysed reaction is S-adenosyl-L-homocysteine + H2O = S-(5-deoxy-D-ribos-5-yl)-L-homocysteine + adenine. It catalyses the reaction S-methyl-5'-thioadenosine + H2O = 5-(methylsulfanyl)-D-ribose + adenine. The enzyme catalyses 5'-deoxyadenosine + H2O = 5-deoxy-D-ribose + adenine. It participates in amino-acid biosynthesis; L-methionine biosynthesis via salvage pathway; S-methyl-5-thio-alpha-D-ribose 1-phosphate from S-methyl-5'-thioadenosine (hydrolase route): step 1/2. In terms of biological role, catalyzes the irreversible cleavage of the glycosidic bond in both 5'-methylthioadenosine (MTA) and S-adenosylhomocysteine (SAH/AdoHcy) to adenine and the corresponding thioribose, 5'-methylthioribose and S-ribosylhomocysteine, respectively. Also cleaves 5'-deoxyadenosine, a toxic by-product of radical S-adenosylmethionine (SAM) enzymes, into 5-deoxyribose and adenine. Thus, is required for in vivo function of the radical SAM enzymes biotin synthase and lipoic acid synthase, that are inhibited by 5'-deoxyadenosine accumulation. The chain is 5'-methylthioadenosine/S-adenosylhomocysteine nucleosidase from Yersinia enterocolitica serotype O:8 / biotype 1B (strain NCTC 13174 / 8081).